Consider the following 427-residue polypeptide: 3-phosphoshikimate 1-carboxyvinyltransferase (427 aa).

3-phosphoshikimate is bound by residues Lys-20, Ser-21, and Arg-25. Lys-20 lines the phosphoenolpyruvate pocket. Gly-92 and Arg-120 together coordinate phosphoenolpyruvate. 3-phosphoshikimate contacts are provided by Ser-166, Gln-168, Asp-312, and Lys-339. Gln-168 is a phosphoenolpyruvate binding site. Asp-312 acts as the Proton acceptor in catalysis. Phosphoenolpyruvate is bound by residues Arg-343 and Arg-385.

This sequence belongs to the EPSP synthase family. Monomer.

The protein localises to the cytoplasm. It catalyses the reaction 3-phosphoshikimate + phosphoenolpyruvate = 5-O-(1-carboxyvinyl)-3-phosphoshikimate + phosphate. It functions in the pathway metabolic intermediate biosynthesis; chorismate biosynthesis; chorismate from D-erythrose 4-phosphate and phosphoenolpyruvate: step 6/7. Catalyzes the transfer of the enolpyruvyl moiety of phosphoenolpyruvate (PEP) to the 5-hydroxyl of shikimate-3-phosphate (S3P) to produce enolpyruvyl shikimate-3-phosphate and inorganic phosphate. The chain is 3-phosphoshikimate 1-carboxyvinyltransferase from Streptococcus equi subsp. zooepidemicus (strain H70).